We begin with the raw amino-acid sequence, 100 residues long: MTPWFLYLIRTADNKLYTGITTDVERRYQQHQSGKGAKALRGKGELTLVFSAPVGDRSLALRAEYRVKQLTKRQKERLVAEGAGFAELLSSLQTPEIKSD.

Residues 2–77 (TPWFLYLIRT…KQLTKRQKER (76 aa)) enclose the GIY-YIG domain.

Belongs to the UPF0213 family.

In Escherichia coli (strain K12 / MC4100 / BW2952), this protein is UPF0213 protein YhbQ.